The chain runs to 107 residues: Sulmotoxin 1 (107 aa).

Residues 1-19 (MKTLLLALAVVVLVCLGSA) form the signal peptide. Positions 20–34 (NELGLGRQRVDRRRR) are excised as a propeptide. Disulfide bonds link cysteine 44-cysteine 68, cysteine 47-cysteine 55, cysteine 61-cysteine 83, cysteine 87-cysteine 98, and cysteine 99-cysteine 104.

Belongs to the three-finger toxin family. Ancestral subfamily. Boigatoxin sub-subfamily. Monomer. As to expression, expressed by the venom gland.

The protein localises to the secreted. In terms of biological role, mammal-specific neurotoxin (tested on mice). Not toxic to lizards (tested on geckos). In Spilotes sulphureus (Amazon puffing snake), this protein is Sulmotoxin 1.